Here is a 686-residue protein sequence, read N- to C-terminus: Methionine--tRNA ligase (686 aa).

Residues 13–23 carry the 'HIGH' region motif; that stretch reads PYANGQIHIGH. Zn(2+) is bound by residues Cys-144, Cys-147, Cys-157, and Cys-160. The 'KMSKS' region signature appears at 335–339; the sequence is KMSKS. Lys-338 contributes to the ATP binding site. Positions 580 to 686 constitute a tRNA-binding domain; the sequence is DFAKVDLRVA…EGAVPGMRIG (107 aa).

It belongs to the class-I aminoacyl-tRNA synthetase family. MetG type 1 subfamily. In terms of assembly, homodimer. Zn(2+) is required as a cofactor.

It localises to the cytoplasm. It catalyses the reaction tRNA(Met) + L-methionine + ATP = L-methionyl-tRNA(Met) + AMP + diphosphate. In terms of biological role, is required not only for elongation of protein synthesis but also for the initiation of all mRNA translation through initiator tRNA(fMet) aminoacylation. The chain is Methionine--tRNA ligase from Cupriavidus necator (strain ATCC 17699 / DSM 428 / KCTC 22496 / NCIMB 10442 / H16 / Stanier 337) (Ralstonia eutropha).